The chain runs to 312 residues: Aldehyde reductase YPR1 (312 aa).

Residue Y56 is the Proton donor of the active site. Position 112 (H112) interacts with substrate. Residue 220-274 (SPFGSANAPLLKEQAIIDMAKKHGVEPAQLIISWSIQRGYVVLAKSVNPERIVSN) coordinates NADP(+).

The protein belongs to the aldo/keto reductase family.

Its subcellular location is the cytoplasm. The enzyme catalyses a primary alcohol + NADP(+) = an aldehyde + NADPH + H(+). It carries out the reaction 2-methylbutan-1-ol + NADP(+) = 2-methylbutanal + NADPH + H(+). It catalyses the reaction hexan-1-ol + NADP(+) = hexanal + NADPH + H(+). In terms of biological role, aldehyde reductase with broad substrate specificity, catalyzing the NADPH-dependent reduction of aldehydes into the corresponding alcohols. In vitro, displays high specific activity towards 2-methylbutanal (2-methylbutyraldehyde), as well as other aldehydes such as hexanal (a toxic lipid peroxidation product and phytoalexin), but exhibits extremely low activity as a glycerol dehydrogenase. Seems to contribute to 2-methylbutanal reduction in vivo, and may therefore play a role in isoleucine catabolism and fusel alcohol formation. This Saccharomyces cerevisiae (strain ATCC 204508 / S288c) (Baker's yeast) protein is Aldehyde reductase YPR1 (YPR1).